The sequence spans 353 residues: Photosystem II D2 protein (353 aa).

N-acetylthreonine is present on Thr2. Thr2 bears the Phosphothreonine mark. The helical transmembrane segment at 41–61 (CAYFALGGWFTGTTFVTSWYT) threads the bilayer. Residue His118 participates in chlorophyll a binding. A helical membrane pass occupies residues 125–141 (GFMLRQFELARSVQLRP). Residues Gln130 and Asn143 each contribute to the pheophytin a site. Residues 153–166 (VFVSVFLIYPLGQS) form a helical membrane-spanning segment. His198 provides a ligand contact to chlorophyll a. The helical transmembrane segment at 208–228 (AALLCAIHGATVENLYFEDGD) threads the bilayer. Residues His215 and Phe262 each coordinate a plastoquinone. Residue His215 participates in Fe cation binding. His269 lines the Fe cation pocket. A helical membrane pass occupies residues 279–295 (GLWMSALGVVGLALNLR).

This sequence belongs to the reaction center PufL/M/PsbA/D family. PSII is composed of 1 copy each of membrane proteins PsbA, PsbB, PsbC, PsbD, PsbE, PsbF, PsbH, PsbI, PsbJ, PsbK, PsbL, PsbM, PsbT, PsbX, PsbY, PsbZ, Psb30/Ycf12, at least 3 peripheral proteins of the oxygen-evolving complex and a large number of cofactors. It forms dimeric complexes. The cofactor is The D1/D2 heterodimer binds P680, chlorophylls that are the primary electron donor of PSII, and subsequent electron acceptors. It shares a non-heme iron and each subunit binds pheophytin, quinone, additional chlorophylls, carotenoids and lipids. There is also a Cl(-1) ion associated with D1 and D2, which is required for oxygen evolution. The PSII complex binds additional chlorophylls, carotenoids and specific lipids..

Its subcellular location is the plastid. The protein localises to the chloroplast thylakoid membrane. The enzyme catalyses 2 a plastoquinone + 4 hnu + 2 H2O = 2 a plastoquinol + O2. Functionally, photosystem II (PSII) is a light-driven water:plastoquinone oxidoreductase that uses light energy to abstract electrons from H(2)O, generating O(2) and a proton gradient subsequently used for ATP formation. It consists of a core antenna complex that captures photons, and an electron transfer chain that converts photonic excitation into a charge separation. The D1/D2 (PsbA/PsbD) reaction center heterodimer binds P680, the primary electron donor of PSII as well as several subsequent electron acceptors. D2 is needed for assembly of a stable PSII complex. This Panax ginseng (Korean ginseng) protein is Photosystem II D2 protein.